A 183-amino-acid polypeptide reads, in one-letter code: ATP-dependent protease subunit HslV (183 aa).

Thr-2 is an active-site residue. The Na(+) site is built by Gly-157, Cys-160, and Thr-163.

The protein belongs to the peptidase T1B family. HslV subfamily. In terms of assembly, a double ring-shaped homohexamer of HslV is capped on each side by a ring-shaped HslU homohexamer. The assembly of the HslU/HslV complex is dependent on binding of ATP.

The protein resides in the cytoplasm. The catalysed reaction is ATP-dependent cleavage of peptide bonds with broad specificity.. Its activity is regulated as follows. Allosterically activated by HslU binding. Functionally, protease subunit of a proteasome-like degradation complex believed to be a general protein degrading machinery. The polypeptide is ATP-dependent protease subunit HslV (Vibrio campbellii (strain ATCC BAA-1116)).